A 288-amino-acid chain; its full sequence is Diaminopimelate epimerase (288 aa).

Substrate-binding residues include N13, Q46, and N66. C75 functions as the Proton donor in the catalytic mechanism. Residues 76-77, N166, N199, and 217-218 contribute to the substrate site; these read GN and ER. C226 serves as the catalytic Proton acceptor. 227–228 provides a ligand contact to substrate; it reads GT.

This sequence belongs to the diaminopimelate epimerase family. In terms of assembly, homodimer.

Its subcellular location is the cytoplasm. It carries out the reaction (2S,6S)-2,6-diaminopimelate = meso-2,6-diaminopimelate. It functions in the pathway amino-acid biosynthesis; L-lysine biosynthesis via DAP pathway; DL-2,6-diaminopimelate from LL-2,6-diaminopimelate: step 1/1. Functionally, catalyzes the stereoinversion of LL-2,6-diaminopimelate (L,L-DAP) to meso-diaminopimelate (meso-DAP), a precursor of L-lysine and an essential component of the bacterial peptidoglycan. This Cupriavidus metallidurans (strain ATCC 43123 / DSM 2839 / NBRC 102507 / CH34) (Ralstonia metallidurans) protein is Diaminopimelate epimerase.